Here is a 494-residue protein sequence, read N- to C-terminus: Hexokinase-2 (494 aa).

The Hexokinase domain maps to 32–483 (GRADAVLREL…SGIGAALLAA (452 aa)). The hexokinase small subdomain stretch occupies residues 87 to 225 (SGEEKGVFYA…GLDMKVTALI (139 aa)). The ADP site is built by Gly-101, Thr-102, and Asn-103. Residues Thr-191, Lys-192, Asn-226, and Asp-227 each coordinate D-glucose. A hexokinase large subdomain region spans residues 226–472 (NDTIGTLAGG…STIVIKLAKD (247 aa)). Thr-250 lines the ADP pocket. D-glucose-binding residues include Asn-253, Glu-281, and Glu-312. Residue Gly-437 participates in ADP binding.

This sequence belongs to the hexokinase family. In terms of tissue distribution, expressed in roots, leaves, flowers, immature seeds, endosperm and seed coat.

The catalysed reaction is a D-hexose + ATP = a D-hexose 6-phosphate + ADP + H(+). It catalyses the reaction D-fructose + ATP = D-fructose 6-phosphate + ADP + H(+). It carries out the reaction D-glucose + ATP = D-glucose 6-phosphate + ADP + H(+). The protein operates within carbohydrate metabolism; hexose metabolism. It participates in carbohydrate degradation; glycolysis; D-glyceraldehyde 3-phosphate and glycerone phosphate from D-glucose: step 1/4. In terms of biological role, fructose and glucose phosphorylating enzyme. In Oryza sativa subsp. japonica (Rice), this protein is Hexokinase-2 (HXK2).